We begin with the raw amino-acid sequence, 262 residues long: Ribosome biogenesis GTPase A (262 aa).

In terms of domain architecture, CP-type G spans 12-157 (KRQIKDLLRL…ILDTPGILYK (146 aa)). Residues 54–57 (NKVD), 109–114 (NTGKST), and glycine 153 contribute to the GTP site.

The protein belongs to the TRAFAC class YlqF/YawG GTPase family. MTG1 subfamily.

The protein resides in the cytoplasm. Required for a late step of 50S ribosomal subunit assembly. Has GTPase activity. Binds to the 23S rRNA. The chain is Ribosome biogenesis GTPase A from Thermotoga maritima (strain ATCC 43589 / DSM 3109 / JCM 10099 / NBRC 100826 / MSB8).